A 356-amino-acid polypeptide reads, in one-letter code: Guanine nucleotide-binding protein alpha-15 subunit (356 aa).

A lipid anchor (N-myristoyl glycine) is attached at G2. Residue C5 is the site of S-palmitoyl cysteine attachment. Positions 33-356 (GNQKLLLLGT…GRNLRGTGME (324 aa)) constitute a G-alpha domain. The G1 motif stretch occupies residues 36–49 (KLLLLGTGECGKST). GTP contacts are provided by residues 41-48 (GTGECGKS), 177-183 (LRIRIPT), 202-206 (DVGGQ), 271-274 (NKRD), and A328. Mg(2+) is bound by residues S48 and T183. The tract at residues 175–183 (DMLRIRIPT) is G2 motif. A G3 motif region spans residues 198-207 (FRIYDVGGQR). Residues 267 to 274 (ILFLNKRD) form a G4 motif region. Positions 326-331 (TCATDT) are G5 motif.

The protein belongs to the G-alpha family. G proteins are composed of 3 units; alpha, beta and gamma. The alpha chain contains the guanine nucleotide binding site.

Guanine nucleotide-binding proteins (G proteins) are involved as modulators or transducers in various transmembrane signaling systems. This is Guanine nucleotide-binding protein alpha-15 subunit (gpa-15) from Caenorhabditis elegans.